Here is a 308-residue protein sequence, read N- to C-terminus: ATP synthase gamma chain (308 aa).

This sequence belongs to the ATPase gamma chain family. F-type ATPases have 2 components, CF(1) - the catalytic core - and CF(0) - the membrane proton channel. CF(1) has five subunits: alpha(3), beta(3), gamma(1), delta(1), epsilon(1). CF(0) has three main subunits: a, b and c.

The protein localises to the cell membrane. Produces ATP from ADP in the presence of a proton gradient across the membrane. The gamma chain is believed to be important in regulating ATPase activity and the flow of protons through the CF(0) complex. The protein is ATP synthase gamma chain of Lacticaseibacillus casei (strain BL23) (Lactobacillus casei).